The following is a 249-amino-acid chain: MPEKAEPAEGWPVVEGDYVVGDPEAPVHVVTLGSHIEEDILKAAGEDKVAIAGPCKTENIGIEKVIANVIANPNIRFGVLCGAEVTGHLTGQCFKAMYENGVDPDSGEIIGAEGAIPYLENIPEEAVERYRDQIVELVDLIDVEDVDEIVKAIEECVEKDPGAYEEGPMTISLEEEEEEELAEVAGMPVSAETVTVEYRINDVRVGVKSIGAMQRYMAGYLSGRTMGLLIGIISGMIFLFLPMVVLGGV.

Residues proline 2–threonine 225 lie on the Cytoplasmic side of the membrane. Position 88 (histidine 88) interacts with 5-hydroxybenzimidazolylcob(I)amide. Residues methionine 226–leucine 246 form a helical membrane-spanning segment. Over glycine 247–valine 249 the chain is Extracellular.

It belongs to the MtrA family. The complex is composed of 8 subunits; MtrA, MtrB, MtrC, MtrD, MtrE, MtrF, MtrG and MtrH. The cofactor is 5-hydroxybenzimidazolylcob(I)amide.

It is found in the cell membrane. The catalysed reaction is 5-methyl-5,6,7,8-tetrahydromethanopterin + coenzyme M + 2 Na(+)(in) = 5,6,7,8-tetrahydromethanopterin + methyl-coenzyme M + 2 Na(+)(out). The protein operates within one-carbon metabolism; methanogenesis from CO(2); methyl-coenzyme M from 5,10-methylene-5,6,7,8-tetrahydromethanopterin: step 2/2. Part of a complex that catalyzes the formation of methyl-coenzyme M and tetrahydromethanopterin from coenzyme M and methyl-tetrahydromethanopterin. This is an energy-conserving, sodium-ion translocating step. The chain is Tetrahydromethanopterin S-methyltransferase subunit A from Methanopyrus kandleri (strain AV19 / DSM 6324 / JCM 9639 / NBRC 100938).